We begin with the raw amino-acid sequence, 171 residues long: Peptide methionine sulfoxide reductase MsrA (171 aa).

The active site involves Cys-13.

Belongs to the MsrA Met sulfoxide reductase family.

It carries out the reaction L-methionyl-[protein] + [thioredoxin]-disulfide + H2O = L-methionyl-(S)-S-oxide-[protein] + [thioredoxin]-dithiol. The catalysed reaction is [thioredoxin]-disulfide + L-methionine + H2O = L-methionine (S)-S-oxide + [thioredoxin]-dithiol. In terms of biological role, has an important function as a repair enzyme for proteins that have been inactivated by oxidation. Catalyzes the reversible oxidation-reduction of methionine sulfoxide in proteins to methionine. This Mycobacterium ulcerans (strain Agy99) protein is Peptide methionine sulfoxide reductase MsrA.